The primary structure comprises 1072 residues: Carbamoyl phosphate synthase large chain (1072 aa).

Positions 1-401 (MPKYKDINKV…SLLKAVRSLE (401 aa)) are carboxyphosphate synthetic domain. Positions 129, 169, 175, 176, 208, 210, 215, 241, 242, 243, 284, and 298 each coordinate ATP. Residues 133–327 (KRKMQEIGEP…IAKVAAKIAI (195 aa)) enclose the ATP-grasp 1 domain. The Mg(2+) site is built by Gln-284, Glu-298, and Asn-300. 3 residues coordinate Mn(2+): Gln-284, Glu-298, and Asn-300. The oligomerization domain stretch occupies residues 402–544 (IKAYGLRLNN…YIYSTYGEED (143 aa)). Positions 545-929 (EVEIHEIPKV…ALYKALEGAG (385 aa)) are carbamoyl phosphate synthetic domain. Residues 671-861 (SKLLKELNIN…MVKLAVEVAL (191 aa)) form the ATP-grasp 2 domain. Residues Arg-707, Lys-746, Ile-748, Glu-752, Gly-777, Val-778, His-779, Ser-780, Gln-820, and Glu-832 each coordinate ATP. The Mg(2+) site is built by Gln-820, Glu-832, and Asn-834. Positions 820, 832, and 834 each coordinate Mn(2+). An MGS-like domain is found at 930–1072 (LKIPKKGKIL…QKDNVKNLVL (143 aa)). An allosteric domain region spans residues 930 to 1072 (LKIPKKGKIL…QKDNVKNLVL (143 aa)).

Belongs to the CarB family. Composed of two chains; the small (or glutamine) chain promotes the hydrolysis of glutamine to ammonia, which is used by the large (or ammonia) chain to synthesize carbamoyl phosphate. Tetramer of heterodimers (alpha,beta)4. Mg(2+) is required as a cofactor. Requires Mn(2+) as cofactor.

The catalysed reaction is hydrogencarbonate + L-glutamine + 2 ATP + H2O = carbamoyl phosphate + L-glutamate + 2 ADP + phosphate + 2 H(+). It carries out the reaction hydrogencarbonate + NH4(+) + 2 ATP = carbamoyl phosphate + 2 ADP + phosphate + 2 H(+). It functions in the pathway amino-acid biosynthesis; L-arginine biosynthesis; carbamoyl phosphate from bicarbonate: step 1/1. The protein operates within pyrimidine metabolism; UMP biosynthesis via de novo pathway; (S)-dihydroorotate from bicarbonate: step 1/3. In terms of biological role, large subunit of the glutamine-dependent carbamoyl phosphate synthetase (CPSase). CPSase catalyzes the formation of carbamoyl phosphate from the ammonia moiety of glutamine, carbonate, and phosphate donated by ATP, constituting the first step of 2 biosynthetic pathways, one leading to arginine and/or urea and the other to pyrimidine nucleotides. The large subunit (synthetase) binds the substrates ammonia (free or transferred from glutamine from the small subunit), hydrogencarbonate and ATP and carries out an ATP-coupled ligase reaction, activating hydrogencarbonate by forming carboxy phosphate which reacts with ammonia to form carbamoyl phosphate. This chain is Carbamoyl phosphate synthase large chain, found in Thermoanaerobacter sp. (strain X514).